Consider the following 159-residue polypeptide: MISLIAALAVDRVIGMENAMPWNLPADLAWFKRNTLNKPVIMGRHTWESIGRPLPGRKNIILSSQPGTDDRVTWVKSVDEAIAACGDVPEIMVIGGGRVYEQFLPKAQKLYLTHIDAEVEGDTHFPDYEPDDWESVFSEFHDADAQNSHSYCFEILERR.

A DHFR domain is found at 1–158 (MISLIAALAV…HSYCFEILER (158 aa)). Substrate is bound at residue isoleucine 5. NADP(+) contacts are provided by residues alanine 7 and 13-19 (VIGMENA). Aspartate 27 contacts substrate. Position 45 to 46 (45 to 46 (HT)) interacts with NADP(+). Arginine 52 and arginine 57 together coordinate substrate. NADP(+)-binding positions include 63 to 64 (SS), lysine 76, and 95 to 102 (GGGRVYEQ). Threonine 113 is a substrate binding site.

Belongs to the dihydrofolate reductase family.

It carries out the reaction (6S)-5,6,7,8-tetrahydrofolate + NADP(+) = 7,8-dihydrofolate + NADPH + H(+). It participates in cofactor biosynthesis; tetrahydrofolate biosynthesis; 5,6,7,8-tetrahydrofolate from 7,8-dihydrofolate: step 1/1. Key enzyme in folate metabolism. Catalyzes an essential reaction for de novo glycine and purine synthesis, and for DNA precursor synthesis. This is Dihydrofolate reductase (folA) from Escherichia coli O6:H1 (strain CFT073 / ATCC 700928 / UPEC).